The primary structure comprises 391 residues: MADIDNKEQSELDQDLDDVEEVEEEETGEETKIKARQLTVQMMQNPQILAALQERLDGLVETPTGYIESLPRVVKRRVNALKNLQVKCAQIEAKFYEEVHDLERKYAVLYQPLFDKRFEIINAIYEPTEEECEWKPDEEDEISEELKEKAKIEDEKKDEEKEDPKGIPEFWLTVFKNVDLLSDMVQEHDEPILKHLKDIKVKFSGAGQPMSFVLEFHFEPNEYFTNEVLTKTYRMRSEPDDSDPFSFDGPEIMGCTGCQIDWKKGKNVTLKTIKKKQKHKGRGTVRTVTKTVSNDSFFNFFAPPEVPESGDLDDDAEAILAADFEIGHFLRERIIPRSVLYFTGEAIEDDDDDYDEEGEEADEEGEEEGDEENDPDYDPKKDQNPAECKQQ.

Residues 1–10 (MADIDNKEQS) are compositionally biased toward basic and acidic residues. Positions 1-32 (MADIDNKEQSELDQDLDDVEEVEEEETGEETK) are disordered. Ala2 bears the N-acetylalanine mark. Ser10 is modified (phosphoserine). The span at 11–28 (ELDQDLDDVEEVEEEETG) shows a compositional bias: acidic residues. A phosphothreonine mark is found at Thr62 and Thr64. Residue Ser69 is modified to Phosphoserine. Lys116 is modified (N6-acetyllysine). The short motif at 125-150 (YEPTEEECEWKPDEEDEISEELKEKA) is the NAP1L motif element. The segment covering 132 to 143 (CEWKPDEEDEIS) has biased composition (acidic residues). The interval 132–163 (CEWKPDEEDEISEELKEKAKIEDEKKDEEKED) is disordered. At Ser143 the chain carries Phosphoserine. Basic and acidic residues predominate over residues 144–163 (EELKEKAKIEDEKKDEEKED). The short motif at 273 to 279 (IKKKQKH) is the Nuclear localization signal element. The span at 346-376 (AIEDDDDDYDEEGEEADEEGEEEGDEENDPD) shows a compositional bias: acidic residues. Residues 346-391 (AIEDDDDDYDEEGEEADEEGEEEGDEENDPDYDPKKDQNPAECKQQ) are disordered. Residues Glu359 and Glu360 each carry the 5-glutamyl polyglycine modification. The segment covering 377–391 (YDPKKDQNPAECKQQ) has biased composition (basic and acidic residues). Position 388 is a cysteine methyl ester (Cys388). Residue Cys388 is the site of S-farnesyl cysteine attachment. Positions 389–391 (KQQ) are cleaved as a propeptide — removed in mature form.

This sequence belongs to the nucleosome assembly protein (NAP) family. As to quaternary structure, homodimer. The dimer binds strongly and sequentially to single and double H2A-H2B heterodimers. Interacts with ERCC6; this interaction increases ERCC6 processivity. Interacts with RAD54. Interacts with SETD1A. Post-translationally, polyglycylated by TTLL10 on glutamate residues, resulting in polyglycine chains on the gamma-carboxyl group. Both polyglutamylation and polyglycylation modifications can coexist on the same protein on adjacent residues, and lowering polyglycylation levels increases polyglutamylation, and reciprocally. Polyglutamylated by TTLL4 on glutamate residues, resulting in polyglutamate chains on the gamma-carboxyl group. Both polyglutamylation and polyglycylation modifications can coexist on the same protein on adjacent residues, and lowering polyglycylation levels increases polyglutamylation, and reciprocally.

It localises to the nucleus. It is found in the melanosome. The protein resides in the cytoplasm. In terms of biological role, histone chaperone that plays a role in the nuclear import of H2A-H2B and nucleosome assembly. Also participates in several important DNA repair mechanisms: greatly enhances ERCC6-mediated chromatin remodeling which is essential for transcription-coupled nucleotide excision DNA repair. Also stimulates homologous recombination (HR) by RAD51 and RAD54 which is essential in mitotic DNA double strand break (DSB) repair. Plays a key role in the regulation of embryonic neurogenesis. Promotes the proliferation of neural progenitors and inhibits neuronal differentiation during cortical development. Regulates neurogenesis via the modulation of RASSF10; regulates RASSF10 expression by promoting SETD1A-mediated H3K4 methylation at the RASSF10 promoter. This is Nucleosome assembly protein 1-like 1 (NAP1L1) from Pongo abelii (Sumatran orangutan).